The primary structure comprises 61 residues: Small ribosomal subunit protein uS14 (61 aa).

4 residues coordinate Zn(2+): Cys24, Cys27, Cys40, and Cys43.

This sequence belongs to the universal ribosomal protein uS14 family. Zinc-binding uS14 subfamily. In terms of assembly, part of the 30S ribosomal subunit. Contacts proteins S3 and S10. Zn(2+) is required as a cofactor.

Its function is as follows. Binds 16S rRNA, required for the assembly of 30S particles and may also be responsible for determining the conformation of the 16S rRNA at the A site. The protein is Small ribosomal subunit protein uS14 of Ruminiclostridium cellulolyticum (strain ATCC 35319 / DSM 5812 / JCM 6584 / H10) (Clostridium cellulolyticum).